We begin with the raw amino-acid sequence, 868 residues long: Paladin (868 aa).

Gly-2 carries N-myristoyl glycine lipidation.

It belongs to the paladin family.

The protein localises to the cytoplasm. The protein resides in the cytosol. In Gallus gallus (Chicken), this protein is Paladin (PALD1).